The sequence spans 209 residues: ATP-dependent Clp protease proteolytic subunit (209 aa).

The Nucleophile role is filled by Ser-101. His-126 is a catalytic residue.

This sequence belongs to the peptidase S14 family. In terms of assembly, component of the chloroplastic Clp protease core complex.

It localises to the plastid. Its subcellular location is the chloroplast stroma. It carries out the reaction Hydrolysis of proteins to small peptides in the presence of ATP and magnesium. alpha-casein is the usual test substrate. In the absence of ATP, only oligopeptides shorter than five residues are hydrolyzed (such as succinyl-Leu-Tyr-|-NHMec, and Leu-Tyr-Leu-|-Tyr-Trp, in which cleavage of the -Tyr-|-Leu- and -Tyr-|-Trp bonds also occurs).. Functionally, cleaves peptides in various proteins in a process that requires ATP hydrolysis. Has a chymotrypsin-like activity. Plays a major role in the degradation of misfolded proteins. This is ATP-dependent Clp protease proteolytic subunit from Huperzia lucidula (Shining clubmoss).